The sequence spans 296 residues: Protoheme IX farnesyltransferase (296 aa).

8 consecutive transmembrane segments (helical) span residues 8–28 (VTKP…FFLA), 35–55 (WILM…GCAI), 84–104 (AAFF…SYFT), 107–127 (VAVA…TMYF), 132–152 (VYGT…GYCA), 162–182 (AILL…IAIF), 215–235 (FAVV…FMVV), and 264–284 (VFFF…LDFN).

This sequence belongs to the UbiA prenyltransferase family. Protoheme IX farnesyltransferase subfamily.

The protein localises to the cell inner membrane. It carries out the reaction heme b + (2E,6E)-farnesyl diphosphate + H2O = Fe(II)-heme o + diphosphate. The protein operates within porphyrin-containing compound metabolism; heme O biosynthesis; heme O from protoheme: step 1/1. In terms of biological role, converts heme B (protoheme IX) to heme O by substitution of the vinyl group on carbon 2 of heme B porphyrin ring with a hydroxyethyl farnesyl side group. The protein is Protoheme IX farnesyltransferase of Marinomonas sp. (strain MWYL1).